A 295-amino-acid chain; its full sequence is MKLVYKNYHETLNQHLMNICEKVNISFEFFPPNNILSEKNLWQVIDKLKLLTPKFFSVTHGTNSKIRATCTSNIVKKIKKYTGIETVPHLTCINSTEEELKVIAKTYWDSGIRHILALRGDIFNTNCKPKIYAVDLIKLLKSIANFEISVAAYPEVHPEAVNAKYDIINLKRKVEAGATRAITQFFFNIDCFLRFRDLCVKNNITIDIVPGIFPISNFKQLLKFSSVSNVSIPKWLCCMFHGLDNDLNTSRIIGSSIAIDMVKVLYSEGIRSFHFYTLNKSEISFAICKILENKS.

The active-site Proton donor/acceptor is the Glu-28. NADH is bound at residue Thr-59. Residues His-89, Arg-119, Gly-120, Asp-121, Ala-133, Tyr-153, His-157, Ala-160, Asp-166, Asn-169, Arg-172, and Lys-173 each contribute to the FAD site. Asp-121 contributes to the (6S)-5-methyl-5,6,7,8-tetrahydrofolate binding site. Residue Gln-184 coordinates NADH. Residues Gln-184, Gln-220, and Lys-280 each coordinate (6S)-5-methyl-5,6,7,8-tetrahydrofolate.

The protein belongs to the methylenetetrahydrofolate reductase family. The cofactor is FAD.

It catalyses the reaction (6S)-5-methyl-5,6,7,8-tetrahydrofolate + NAD(+) = (6R)-5,10-methylene-5,6,7,8-tetrahydrofolate + NADH + H(+). It participates in one-carbon metabolism; tetrahydrofolate interconversion. Its pathway is amino-acid biosynthesis; L-methionine biosynthesis via de novo pathway. In terms of biological role, catalyzes the NADH-dependent reduction of 5,10-methylenetetrahydrofolate to 5-methyltetrahydrofolate. Is required to provide the methyl group necessary for methionine synthetase to convert homocysteine to methionine; the methyl group is given by 5-methyltetrahydrofolate. This Buchnera aphidicola subsp. Baizongia pistaciae (strain Bp) protein is 5,10-methylenetetrahydrofolate reductase (metF).